The following is a 188-amino-acid chain: Large ribosomal subunit protein uL5 (188 aa).

This sequence belongs to the universal ribosomal protein uL5 family. In terms of assembly, part of the 50S ribosomal subunit; part of the 5S rRNA/L5/L18/L25 subcomplex. Contacts the 5S rRNA and the P site tRNA. Forms a bridge to the 30S subunit in the 70S ribosome.

Its function is as follows. This is one of the proteins that bind and probably mediate the attachment of the 5S RNA into the large ribosomal subunit, where it forms part of the central protuberance. In the 70S ribosome it contacts protein S13 of the 30S subunit (bridge B1b), connecting the 2 subunits; this bridge is implicated in subunit movement. Contacts the P site tRNA; the 5S rRNA and some of its associated proteins might help stabilize positioning of ribosome-bound tRNAs. The polypeptide is Large ribosomal subunit protein uL5 (Aquifex pyrophilus).